Reading from the N-terminus, the 767-residue chain is Phosphoribosylformylglycinamidine synthase subunit PurL (767 aa).

His65 is an active-site residue. ATP contacts are provided by Tyr68 and Lys112. Glu114 contributes to the Mg(2+) binding site. Residues 115–118 (SHNH) and Arg137 contribute to the substrate site. The active-site Proton acceptor is His116. Asp138 serves as a coordination point for Mg(2+). Gln262 lines the substrate pocket. Mg(2+) is bound at residue Asp290. 334–336 (ESQ) is a binding site for substrate. ATP contacts are provided by Asp522 and Gly559. Asn560 serves as a coordination point for Mg(2+). Ser562 is a substrate binding site.

It belongs to the FGAMS family. Monomer. Part of the FGAM synthase complex composed of 1 PurL, 1 PurQ and 2 PurS subunits.

Its subcellular location is the cytoplasm. The catalysed reaction is N(2)-formyl-N(1)-(5-phospho-beta-D-ribosyl)glycinamide + L-glutamine + ATP + H2O = 2-formamido-N(1)-(5-O-phospho-beta-D-ribosyl)acetamidine + L-glutamate + ADP + phosphate + H(+). It participates in purine metabolism; IMP biosynthesis via de novo pathway; 5-amino-1-(5-phospho-D-ribosyl)imidazole from N(2)-formyl-N(1)-(5-phospho-D-ribosyl)glycinamide: step 1/2. In terms of biological role, part of the phosphoribosylformylglycinamidine synthase complex involved in the purines biosynthetic pathway. Catalyzes the ATP-dependent conversion of formylglycinamide ribonucleotide (FGAR) and glutamine to yield formylglycinamidine ribonucleotide (FGAM) and glutamate. The FGAM synthase complex is composed of three subunits. PurQ produces an ammonia molecule by converting glutamine to glutamate. PurL transfers the ammonia molecule to FGAR to form FGAM in an ATP-dependent manner. PurS interacts with PurQ and PurL and is thought to assist in the transfer of the ammonia molecule from PurQ to PurL. This is Phosphoribosylformylglycinamidine synthase subunit PurL from Renibacterium salmoninarum (strain ATCC 33209 / DSM 20767 / JCM 11484 / NBRC 15589 / NCIMB 2235).